Reading from the N-terminus, the 231-residue chain is Large ribosomal subunit protein uL1 (231 aa).

It belongs to the universal ribosomal protein uL1 family. As to quaternary structure, part of the 50S ribosomal subunit.

Functionally, binds directly to 23S rRNA. The L1 stalk is quite mobile in the ribosome, and is involved in E site tRNA release. Protein L1 is also a translational repressor protein, it controls the translation of the L11 operon by binding to its mRNA. In Pseudomonas fluorescens (strain ATCC BAA-477 / NRRL B-23932 / Pf-5), this protein is Large ribosomal subunit protein uL1.